We begin with the raw amino-acid sequence, 229 residues long: MAKKKAFIPFFYFTSIVFLPWLISLCCNKSLKTWITNWWNTRQCETFLNDIQEKSVLEKFIQLEELFQLDEMIKEYPETDLQQFRLGIHKETIQFIKIHNEYRIHTILHFSTNLISFVILSGYSFWGKEKLFILNSWVQEFLYNLSDTIKAFSILLLTDLCIGFHSPHGWELMIGYIYKDFGFAHYEQILSGLVSTFPVILDTIFKYWIFRYLNRVSPSLVVIYHAIND.

The next 3 membrane-spanning stretches (helical) occupy residues 6–26, 107–127, and 189–209; these read AFIP…ISLC, ILHF…SFWG, and ILSG…KYWI.

It belongs to the CemA family.

The protein localises to the plastid. It is found in the chloroplast inner membrane. It catalyses the reaction K(+)(in) + H(+)(out) = K(+)(out) + H(+)(in). In terms of biological role, contributes to K(+)/H(+) antiport activity by supporting proton efflux to control proton extrusion and homeostasis in chloroplasts in a light-dependent manner to modulate photosynthesis. Prevents excessive induction of non-photochemical quenching (NPQ) under continuous-light conditions. Indirectly promotes efficient inorganic carbon uptake into chloroplasts. This is Potassium/proton antiporter CemA from Olimarabidopsis pumila (Dwarf rocket).